The following is a 446-amino-acid chain: Tol-Pal system protein TolB (446 aa).

The first 19 residues, 1–19 (MLLRYLFILFIIIPIKAFA), serve as a signal peptide directing secretion.

Belongs to the TolB family. As to quaternary structure, the Tol-Pal system is composed of five core proteins: the inner membrane proteins TolA, TolQ and TolR, the periplasmic protein TolB and the outer membrane protein Pal. They form a network linking the inner and outer membranes and the peptidoglycan layer.

The protein resides in the periplasm. Functionally, part of the Tol-Pal system, which plays a role in outer membrane invagination during cell division and is important for maintaining outer membrane integrity. The sequence is that of Tol-Pal system protein TolB from Pelagibacter ubique (strain HTCC1062).